The sequence spans 208 residues: Uracil phosphoribosyltransferase (208 aa).

5-phospho-alpha-D-ribose 1-diphosphate contacts are provided by residues Arg-78, Arg-103, and 130-138 (DPMLATGGS). Residues Ile-193 and 198–200 (GDA) each bind uracil. Asp-199 provides a ligand contact to 5-phospho-alpha-D-ribose 1-diphosphate.

The protein belongs to the UPRTase family. It depends on Mg(2+) as a cofactor.

It carries out the reaction UMP + diphosphate = 5-phospho-alpha-D-ribose 1-diphosphate + uracil. The protein operates within pyrimidine metabolism; UMP biosynthesis via salvage pathway; UMP from uracil: step 1/1. Its activity is regulated as follows. Allosterically activated by GTP. Catalyzes the conversion of uracil and 5-phospho-alpha-D-ribose 1-diphosphate (PRPP) to UMP and diphosphate. The sequence is that of Uracil phosphoribosyltransferase from Shewanella oneidensis (strain ATCC 700550 / JCM 31522 / CIP 106686 / LMG 19005 / NCIMB 14063 / MR-1).